The following is an 86-amino-acid chain: RNA-binding protein Hfq (86 aa).

The Sm domain occupies 9-68; the sequence is DPFLNALRRERIPVSIYLVNGIKLQGQIESFDQFVILLKNTVNQMVYKHAISTVVPARPV. Positions 65 to 86 are disordered; the sequence is ARPVSHHSGERGSDRPSEKSED. A compositionally biased stretch (basic and acidic residues) spans 71 to 86; sequence HSGERGSDRPSEKSED.

This sequence belongs to the Hfq family. Homohexamer.

Its function is as follows. RNA chaperone that binds small regulatory RNA (sRNAs) and mRNAs to facilitate mRNA translational regulation in response to envelope stress, environmental stress and changes in metabolite concentrations. Also binds with high specificity to tRNAs. The sequence is that of RNA-binding protein Hfq from Vibrio vulnificus (strain YJ016).